We begin with the raw amino-acid sequence, 144 residues long: Flagellar assembly factor FliW (144 aa).

Belongs to the FliW family. Interacts with translational regulator CsrA and flagellin(s).

It is found in the cytoplasm. Acts as an anti-CsrA protein, binds CsrA and prevents it from repressing translation of its target genes, one of which is flagellin. Binds to flagellin and participates in the assembly of the flagellum. The chain is Flagellar assembly factor FliW from Geobacillus sp. (strain WCH70).